Reading from the N-terminus, the 310-residue chain is HPr kinase/phosphorylase (310 aa).

Catalysis depends on residues His-138 and Lys-159. ATP is bound at residue 153 to 160 (GGSGVGKS). Ser-160 contacts Mg(2+). Asp-177 acts as the Proton acceptor; for phosphorylation activity. Proton donor; for dephosphorylation activity in catalysis. The segment at 201 to 210 (LEIRGLGIIN) is important for the catalytic mechanism of both phosphorylation and dephosphorylation. Glu-202 is a binding site for Mg(2+). Arg-243 is a catalytic residue. The interval 264 to 269 (PVRPGR) is important for the catalytic mechanism of dephosphorylation.

This sequence belongs to the HPrK/P family. Homohexamer. It depends on Mg(2+) as a cofactor.

The catalysed reaction is [HPr protein]-L-serine + ATP = [HPr protein]-O-phospho-L-serine + ADP + H(+). It carries out the reaction [HPr protein]-O-phospho-L-serine + phosphate + H(+) = [HPr protein]-L-serine + diphosphate. Functionally, catalyzes the ATP- as well as the pyrophosphate-dependent phosphorylation of a specific serine residue in HPr, a phosphocarrier protein of the phosphoenolpyruvate-dependent sugar phosphotransferase system (PTS). HprK/P also catalyzes the pyrophosphate-producing, inorganic phosphate-dependent dephosphorylation (phosphorolysis) of seryl-phosphorylated HPr (P-Ser-HPr). The two antagonistic activities of HprK/P are regulated by several intracellular metabolites, which change their concentration in response to the absence or presence of rapidly metabolisable carbon sources (glucose, fructose, etc.) in the growth medium. Also phosphorylates/dephosphorylates the HPr-like catabolite repression protein crh on a specific serine residue. Therefore, by controlling the phosphorylation state of HPr and crh, HPrK/P is a sensor enzyme that plays a major role in the regulation of carbon metabolism and sugar transport: it mediates carbon catabolite repression (CCR), and regulates PTS-catalyzed carbohydrate uptake and inducer exclusion. The polypeptide is HPr kinase/phosphorylase (Shouchella clausii (strain KSM-K16) (Alkalihalobacillus clausii)).